A 137-amino-acid chain; its full sequence is Large ribosomal subunit protein uL16 (137 aa).

Belongs to the universal ribosomal protein uL16 family. In terms of assembly, part of the 50S ribosomal subunit.

Functionally, binds 23S rRNA and is also seen to make contacts with the A and possibly P site tRNAs. In Leptospira biflexa serovar Patoc (strain Patoc 1 / Ames), this protein is Large ribosomal subunit protein uL16.